The sequence spans 598 residues: Elongation factor 4 (598 aa).

Residues 4–186 (INIRNFAIIA…AIVSRLPAPS (183 aa)) enclose the tr-type G domain. Residues 16 to 21 (DHGKST) and 133 to 136 (NKID) contribute to the GTP site.

It belongs to the TRAFAC class translation factor GTPase superfamily. Classic translation factor GTPase family. LepA subfamily.

Its subcellular location is the cell inner membrane. It catalyses the reaction GTP + H2O = GDP + phosphate + H(+). In terms of biological role, required for accurate and efficient protein synthesis under certain stress conditions. May act as a fidelity factor of the translation reaction, by catalyzing a one-codon backward translocation of tRNAs on improperly translocated ribosomes. Back-translocation proceeds from a post-translocation (POST) complex to a pre-translocation (PRE) complex, thus giving elongation factor G a second chance to translocate the tRNAs correctly. Binds to ribosomes in a GTP-dependent manner. This is Elongation factor 4 from Ehrlichia ruminantium (strain Gardel).